We begin with the raw amino-acid sequence, 360 residues long: Ferredoxin--NADP reductase 1 (360 aa).

Positions 43, 51, 56, 96, 141, 307, and 348 each coordinate FAD.

Belongs to the ferredoxin--NADP reductase type 2 family. In terms of assembly, homodimer. Requires FAD as cofactor.

It carries out the reaction 2 reduced [2Fe-2S]-[ferredoxin] + NADP(+) + H(+) = 2 oxidized [2Fe-2S]-[ferredoxin] + NADPH. The protein is Ferredoxin--NADP reductase 1 of Cupriavidus taiwanensis (strain DSM 17343 / BCRC 17206 / CCUG 44338 / CIP 107171 / LMG 19424 / R1) (Ralstonia taiwanensis (strain LMG 19424)).